The chain runs to 215 residues: Transmembrane emp24 domain-containing protein 11 (215 aa).

The signal sequence occupies residues 1 to 17 (MQIQTILLCFSFSFSAA). At 18 to 167 (FYFHAGEREE…ILKEQDYQRD (150 aa)) the chain is on the lumenal side. Residues 27 to 125 (EKCIIEDIPS…KLRIHLDIRV (99 aa)) enclose the GOLD domain. A glycan (N-linked (GlcNAc...) asparagine) is linked at Asn105. Residues 136–171 (QAKDKVNEVTFKLQHLIEQVEQILKEQDYQRDREEN) are a coiled coil. Residues 168–185 (REENFRITSEDTNRNVLW) traverse the membrane as a helical segment. Topologically, residues 186 to 215 (WAFAQILIFISVGIFQMKHLKDFFIAKKLV) are cytoplasmic. The COPII vesicle coat-binding signature appears at 208–209 (FF). The COPI vesicle coat-binding motif lies at 208–215 (FFIAKKLV).

Belongs to the EMP24/GP25L family.

The protein resides in the endoplasmic reticulum membrane. Part of a complex whose function is to bind Ca(2+) to the ER membrane and thereby regulate the retention of ER resident proteins. The chain is Transmembrane emp24 domain-containing protein 11 (Tmed11) from Mus musculus (Mouse).